A 272-amino-acid polypeptide reads, in one-letter code: SKA complex subunit 1 homolog (272 aa).

Residues 48-75 are a coiled coil; sequence ALSSMELQVQSIKDRLREETEAIPKAKK.

It belongs to the SKA1 family.

The protein is SKA complex subunit 1 homolog of Arabidopsis thaliana (Mouse-ear cress).